The following is a 346-amino-acid chain: Protein RecA (346 aa).

Residue 67–74 coordinates ATP; the sequence is GPESSGKT.

The protein belongs to the RecA family.

It is found in the cytoplasm. Can catalyze the hydrolysis of ATP in the presence of single-stranded DNA, the ATP-dependent uptake of single-stranded DNA by duplex DNA, and the ATP-dependent hybridization of homologous single-stranded DNAs. It interacts with LexA causing its activation and leading to its autocatalytic cleavage. The protein is Protein RecA of Mycobacteroides abscessus (strain ATCC 19977 / DSM 44196 / CCUG 20993 / CIP 104536 / JCM 13569 / NCTC 13031 / TMC 1543 / L948) (Mycobacterium abscessus).